The chain runs to 303 residues: Recombination-associated protein RdgC (303 aa).

It belongs to the RdgC family.

It is found in the cytoplasm. The protein resides in the nucleoid. May be involved in recombination. The polypeptide is Recombination-associated protein RdgC (Shewanella frigidimarina (strain NCIMB 400)).